The primary structure comprises 435 residues: tRNA(Ile)-lysidine synthase (435 aa).

23–28 (SGGMDS) provides a ligand contact to ATP.

This sequence belongs to the tRNA(Ile)-lysidine synthase family.

It localises to the cytoplasm. It catalyses the reaction cytidine(34) in tRNA(Ile2) + L-lysine + ATP = lysidine(34) in tRNA(Ile2) + AMP + diphosphate + H(+). In terms of biological role, ligates lysine onto the cytidine present at position 34 of the AUA codon-specific tRNA(Ile) that contains the anticodon CAU, in an ATP-dependent manner. Cytidine is converted to lysidine, thus changing the amino acid specificity of the tRNA from methionine to isoleucine. The polypeptide is tRNA(Ile)-lysidine synthase (Xanthomonas campestris pv. campestris (strain 8004)).